A 66-amino-acid polypeptide reads, in one-letter code: MFKEYKIYKFFEQVKQETYKVVWPTRKELVASTLVVVVAVFIFSPICLVLDYSIHNIMQLLLNIGK.

Residues 29–49 (LVASTLVVVVAVFIFSPICLV) form a helical membrane-spanning segment.

It belongs to the SecE/SEC61-gamma family. As to quaternary structure, component of the Sec protein translocase complex. Heterotrimer consisting of SecY, SecE and SecG subunits. The heterotrimers can form oligomers, although 1 heterotrimer is thought to be able to translocate proteins. Interacts with the ribosome. Interacts with SecDF, and other proteins may be involved. Interacts with SecA.

The protein localises to the cell inner membrane. Its function is as follows. Essential subunit of the Sec protein translocation channel SecYEG. Clamps together the 2 halves of SecY. May contact the channel plug during translocation. This chain is Protein translocase subunit SecE, found in Rickettsia montanensis.